We begin with the raw amino-acid sequence, 506 residues long: MKEYQVYLERARSRQQDFLYPLIFREYIYGLAYSHNFNRSIFLENVGSDSKYSLLIVKRLITRMYQQNHLIISANDSNKNPFWGYNKNIYSQIISEGFAIVVEIPFFLELSSSLEEAEIIKSYKNLRSIHSIFPFLEDKFTYFNYVSDIRIPYPIHLEILVQILRYWVKDAPFFHLLRLFLYNFSNWNSFITTKNSISTFSKSNPRLFLFLYNFYVCEYESIFLFLRNKSSHLRLKSFNVFFERIFFYAKREHLVEVFAKDFSYTLTFFKDPLIHYVRYQGKCILASKNSPFLMNKWKHYFIHLWQGFFYVWSQPRTMNINQLSEHSFQLLGYFLNVRVNRSVVRSQMLQNTFLIEIFNKKLDLIVPIIPLIRSLAKAKFCNVLGHPISKPVWADSSDFDIIDRFLRICRNLSHYYNGSSKKKSLYRIKYILRLSCIKTLACKHKSTVRAFLKRSGSEELLEEFFTEEEEILSLIFPRDSSTLHRLNRNRIWYLDILFSNDLVNDE.

This sequence belongs to the intron maturase 2 family. MatK subfamily.

It localises to the plastid. It is found in the chloroplast. Functionally, usually encoded in the trnK tRNA gene intron. Probably assists in splicing its own and other chloroplast group II introns. This is Maturase K from Medicago truncatula (Barrel medic).